The primary structure comprises 401 residues: Probable aspartic-type endopeptidase TRV_05382 (401 aa).

The first 22 residues, methionine 1 to alanine 22, serve as a signal peptide directing secretion. N-linked (GlcNAc...) asparagine glycosylation is found at asparagine 80 and asparagine 102. Residues phenylalanine 94–alanine 398 form the Peptidase A1 domain. Aspartate 110 is an active-site residue. N-linked (GlcNAc...) asparagine glycosylation is present at asparagine 282. Aspartate 292 is a catalytic residue. N-linked (GlcNAc...) asparagine glycosylation is present at asparagine 329.

The protein belongs to the peptidase A1 family.

Its subcellular location is the secreted. In terms of biological role, probable aspartic-type endopeptidase which contributes to virulence. In Trichophyton verrucosum (strain HKI 0517), this protein is Probable aspartic-type endopeptidase TRV_05382.